A 203-amino-acid polypeptide reads, in one-letter code: dITP/XTP pyrophosphatase (203 aa).

7–12 serves as a coordination point for substrate; that stretch reads TGNRDK. Asp-73 serves as the catalytic Proton acceptor. Asp-73 provides a ligand contact to Mg(2+). Substrate is bound by residues Ser-74, 155–158, Lys-178, and 183–184; these read FGYD and HR.

This sequence belongs to the HAM1 NTPase family. As to quaternary structure, homodimer. Mg(2+) serves as cofactor.

It carries out the reaction XTP + H2O = XMP + diphosphate + H(+). The catalysed reaction is dITP + H2O = dIMP + diphosphate + H(+). The enzyme catalyses ITP + H2O = IMP + diphosphate + H(+). Pyrophosphatase that catalyzes the hydrolysis of nucleoside triphosphates to their monophosphate derivatives, with a high preference for the non-canonical purine nucleotides XTP (xanthosine triphosphate), dITP (deoxyinosine triphosphate) and ITP. Seems to function as a house-cleaning enzyme that removes non-canonical purine nucleotides from the nucleotide pool, thus preventing their incorporation into DNA/RNA and avoiding chromosomal lesions. The chain is dITP/XTP pyrophosphatase from Wolinella succinogenes (strain ATCC 29543 / DSM 1740 / CCUG 13145 / JCM 31913 / LMG 7466 / NCTC 11488 / FDC 602W) (Vibrio succinogenes).